A 237-amino-acid polypeptide reads, in one-letter code: Probable GTP-binding protein EngB (237 aa).

One can recognise an EngB-type G domain in the interval 13–188 (TGYEIAFAGR…ASVMAGRLNY (176 aa)). Residues 21 to 28 (GRSNAGKS), 48 to 52 (GRTQM), 67 to 70 (DLPG), 134 to 137 (TKAD), and 167 to 169 (FSS) contribute to the GTP site. Residues Ser-28 and Thr-50 each contribute to the Mg(2+) site. A compositionally biased stretch (acidic residues) spans 207 to 220 (DDLNDELMDQDETS). The disordered stretch occupies residues 207–237 (DDLNDELMDQDETSEFNTENIDDHLDQEPKI). The segment covering 227–237 (IDDHLDQEPKI) has biased composition (basic and acidic residues).

This sequence belongs to the TRAFAC class TrmE-Era-EngA-EngB-Septin-like GTPase superfamily. EngB GTPase family. It depends on Mg(2+) as a cofactor.

In terms of biological role, necessary for normal cell division and for the maintenance of normal septation. The chain is Probable GTP-binding protein EngB from Acinetobacter baylyi (strain ATCC 33305 / BD413 / ADP1).